Here is a 443-residue protein sequence, read N- to C-terminus: DNA primase DnaG (443 aa).

In terms of domain architecture, Toprim spans 169-243; the sequence is DSIIIVEGRA…DIDYVSRAPY (75 aa). Residues E175, D217, and D219 each contribute to the Mg(2+) site.

The protein belongs to the archaeal DnaG primase family. Forms a ternary complex with MCM helicase and DNA. Mg(2+) serves as cofactor.

It catalyses the reaction ssDNA + n NTP = ssDNA/pppN(pN)n-1 hybrid + (n-1) diphosphate.. In terms of biological role, RNA polymerase that catalyzes the synthesis of short RNA molecules used as primers for DNA polymerase during DNA replication. The sequence is that of DNA primase DnaG from Methanococcus vannielii (strain ATCC 35089 / DSM 1224 / JCM 13029 / OCM 148 / SB).